Here is a 453-residue protein sequence, read N- to C-terminus: 3-phosphoshikimate 1-carboxyvinyltransferase (453 aa).

Lys28, Ser29, and Arg33 together coordinate 3-phosphoshikimate. Lys28 contributes to the phosphoenolpyruvate binding site. Residues Gly101 and Arg129 each contribute to the phosphoenolpyruvate site. 3-phosphoshikimate contacts are provided by Ser174, Gln176, Asp326, and Lys353. Position 176 (Gln176) interacts with phosphoenolpyruvate. The active-site Proton acceptor is Asp326. Phosphoenolpyruvate-binding residues include Arg357 and Arg405.

The protein belongs to the EPSP synthase family. Monomer.

Its subcellular location is the cytoplasm. It carries out the reaction 3-phosphoshikimate + phosphoenolpyruvate = 5-O-(1-carboxyvinyl)-3-phosphoshikimate + phosphate. The protein operates within metabolic intermediate biosynthesis; chorismate biosynthesis; chorismate from D-erythrose 4-phosphate and phosphoenolpyruvate: step 6/7. Catalyzes the transfer of the enolpyruvyl moiety of phosphoenolpyruvate (PEP) to the 5-hydroxyl of shikimate-3-phosphate (S3P) to produce enolpyruvyl shikimate-3-phosphate and inorganic phosphate. This is 3-phosphoshikimate 1-carboxyvinyltransferase from Zymomonas mobilis subsp. mobilis (strain ATCC 31821 / ZM4 / CP4).